A 513-amino-acid polypeptide reads, in one-letter code: Light-independent protochlorophyllide reductase subunit B (513 aa).

Residue Asp-36 coordinates [4Fe-4S] cluster. Asp-299 functions as the Proton donor in the catalytic mechanism. 434–435 (GM) is a binding site for substrate.

It belongs to the ChlB/BchB/BchZ family. Protochlorophyllide reductase is composed of three subunits; ChlL, ChlN and ChlB. Forms a heterotetramer of two ChlB and two ChlN subunits. Requires [4Fe-4S] cluster as cofactor.

It is found in the plastid. The protein resides in the chloroplast. The catalysed reaction is chlorophyllide a + oxidized 2[4Fe-4S]-[ferredoxin] + 2 ADP + 2 phosphate = protochlorophyllide a + reduced 2[4Fe-4S]-[ferredoxin] + 2 ATP + 2 H2O. It participates in porphyrin-containing compound metabolism; chlorophyll biosynthesis (light-independent). Component of the dark-operative protochlorophyllide reductase (DPOR) that uses Mg-ATP and reduced ferredoxin to reduce ring D of protochlorophyllide (Pchlide) to form chlorophyllide a (Chlide). This reaction is light-independent. The NB-protein (ChlN-ChlB) is the catalytic component of the complex. The protein is Light-independent protochlorophyllide reductase subunit B of Zygnema circumcarinatum (Green alga).